Consider the following 227-residue polypeptide: Probable maleylacetoacetate isomerase 2 (227 aa).

In terms of domain architecture, GST N-terminal spans 14-97 (IQPILYSYWR…YLEETRPQRP (84 aa)). Glutathione-binding positions include 24-29 (SSCSWR), Q55, V69, 81-82 (ES), Q121, and 125-127 (NLI). The 121-residue stretch at 102–222 (DVHKRAKVRE…HPSNQPDCPP (121 aa)) folds into the GST C-terminal domain.

Belongs to the GST superfamily. Zeta family. Glutathione serves as cofactor.

Its subcellular location is the cytoplasm. It catalyses the reaction 4-maleylacetoacetate = 4-fumarylacetoacetate. It carries out the reaction RX + glutathione = an S-substituted glutathione + a halide anion + H(+). Its pathway is amino-acid degradation; L-phenylalanine degradation; acetoacetate and fumarate from L-phenylalanine: step 5/6. Its function is as follows. Catalyzes the glutathione dependent oxygenation of dichloroacetic acid to glyoxylic acid in vitro. Has no glutathione thioltransferase activity with 4-hydroxynonenal (4-HNE), adrenochrome, phenethyl isothiocyanate (PEITC), 5-hydroperoxyeicosatetraenoic acid ((5S)-HpETE), prostaglandin A2 (PGA2) or 2-hydroxyethyldisulfide (HED). In Drosophila melanogaster (Fruit fly), this protein is Probable maleylacetoacetate isomerase 2 (GstZ2).